We begin with the raw amino-acid sequence, 132 residues long: Pro-MCH 1 (132 aa).

The signal sequence occupies residues 1-24 (MRDSVLSVIFALALFLECYTPSMA). An intrachain disulfide couples cysteine 120 to cysteine 129.

It belongs to the MCH family. Pituitary gland. Produced in neurons of lateral basal hypothalamus which project both to the brain and to the neural lobe of the pituitary gland from where MCH is released.

In terms of biological role, plays a role in skin pigmentation by antagonizing the action of melanotropin alpha. Induces melanin concentration within the melanophores. May participate in the control of the hypothalamo-pituitary adrenal gland axis by inhibiting the release of ACTH. The sequence is that of Pro-MCH 1 (mch1) from Oncorhynchus kisutch (Coho salmon).